Here is an 80-residue protein sequence, read N- to C-terminus: MSQEDIFSKVKDIVAEQLSVDVAEVKPESSFQNDLGADSLDTVELVMALEEAFDIEIPDEAAEGIATVQDAVDFIASKAA.

A Carrier domain is found at 4-79 (EDIFSKVKDI…DAVDFIASKA (76 aa)). Ser39 carries the post-translational modification O-(pantetheine 4'-phosphoryl)serine.

Belongs to the acyl carrier protein (ACP) family. In terms of processing, 4'-phosphopantetheine is transferred from CoA to a specific serine of apo-ACP by AcpS. This modification is essential for activity because fatty acids are bound in thioester linkage to the sulfhydryl of the prosthetic group.

It is found in the cytoplasm. It functions in the pathway lipid metabolism; fatty acid biosynthesis. In terms of biological role, carrier of the growing fatty acid chain in fatty acid biosynthesis. This chain is Acyl carrier protein, found in Synechococcus elongatus (strain ATCC 33912 / PCC 7942 / FACHB-805) (Anacystis nidulans R2).